The chain runs to 494 residues: Cytochrome P450 2A13 (494 aa).

Asn-297 is a binding site for substrate. Cys-439 is a heme binding site.

This sequence belongs to the cytochrome P450 family. Heme is required as a cofactor. Expressed in liver and a number of extrahepatic tissues, including nasal mucosa, lung, trachea, brain, mammary gland, prostate, testis, and uterus, but not in heart, kidney, bone marrow, colon, small intestine, spleen, stomach, thymus, or skeletal muscle.

It localises to the endoplasmic reticulum membrane. The protein localises to the microsome membrane. It catalyses the reaction an organic molecule + reduced [NADPH--hemoprotein reductase] + O2 = an alcohol + oxidized [NADPH--hemoprotein reductase] + H2O + H(+). Functionally, exhibits a coumarin 7-hydroxylase activity. Active in the metabolic activation of hexamethylphosphoramide, N,N-dimethylaniline, 2'-methoxyacetophenone, N-nitrosomethylphenylamine, and the tobacco-specific carcinogen, 4-(methylnitrosamino)-1-(3-pyridyl)-1-butanone. Possesses phenacetin O-deethylation activity. This is Cytochrome P450 2A13 (CYP2A13) from Homo sapiens (Human).